A 529-amino-acid polypeptide reads, in one-letter code: uncharacterized protein (529 aa).

One can recognise an Arf-GAP domain in the interval 13–129 (QTAMRKMRAL…LSTLCQEAQR (117 aa)). The segment at 28–51 (CFDCGARNPTWCTVTYGVFLCIDC) adopts a C4-type zinc-finger fold. Basic and acidic residues predominate over residues 291–301 (QMEAKVAKDPT). 4 disordered regions span residues 291–313 (QMEA…GMGG), 335–357 (VLTF…DDKY), 398–424 (KSRY…GASP), and 468–493 (FGSE…SDLK). Positions 399–420 (SRYTASSSSSSTSRAPTTRLTA) are enriched in low complexity. The segment covering 476–487 (NGSQQRQSSQVP) has biased composition (polar residues).

GTPase-activating protein for the ADP ribosylation factor family. This is an uncharacterized protein from Caenorhabditis elegans.